The sequence spans 351 residues: Histidinol-phosphate aminotransferase (351 aa).

Positions 1-26 (MRFRAELEPLSPYNPPRASQEAAAER) are disordered. Residue Lys-223 is modified to N6-(pyridoxal phosphate)lysine.

This sequence belongs to the class-II pyridoxal-phosphate-dependent aminotransferase family. Histidinol-phosphate aminotransferase subfamily. In terms of assembly, homodimer. Pyridoxal 5'-phosphate is required as a cofactor.

It catalyses the reaction L-histidinol phosphate + 2-oxoglutarate = 3-(imidazol-4-yl)-2-oxopropyl phosphate + L-glutamate. It participates in amino-acid biosynthesis; L-histidine biosynthesis; L-histidine from 5-phospho-alpha-D-ribose 1-diphosphate: step 7/9. The polypeptide is Histidinol-phosphate aminotransferase (Rubrobacter xylanophilus (strain DSM 9941 / JCM 11954 / NBRC 16129 / PRD-1)).